Consider the following 445-residue polypeptide: Adenine permease AdeP (445 aa).

Residues 1–28 are Cytoplasmic-facing; sequence MSHQHTTQTSGQGMLERVFKLREHGTTA. A helical membrane pass occupies residues 29 to 52; sequence RTEVIAGFTTFLTMVYIVFVNPQI. The Periplasmic segment spans residues 53–62; sequence LGVAGMDTSA. A helical transmembrane segment spans residues 63 to 81; the sequence is VFVTTCLIAAFGSIMMGLF. The Cytoplasmic portion of the chain corresponds to 82 to 83; that stretch reads AN. The chain crosses the membrane as a discontinuously helical span at residues 84-100; that stretch reads LPVALAPAMGLNAFFAF. Residues 101–112 lie on the Periplasmic side of the membrane; that stretch reads VVVQAMGLPWQV. A helical membrane pass occupies residues 113–132; it reads GMGAIFWGAIGLLLLTIFRV. Residues 133–144 are Cytoplasmic-facing; that stretch reads RYWMIANIPVSL. A helical membrane pass occupies residues 145–165; the sequence is RVGITSGIGLFIGMMGLKNAG. At 166-181 the chain is on the periplasmic side; it reads VIVANPETLVSIGNLT. A helical membrane pass occupies residues 182 to 199; the sequence is SHSVLLGILGFFIIAILA. The Cytoplasmic segment spans residues 200–203; it reads SRNI. Residues 204 to 222 traverse the membrane as a helical segment; the sequence is HAAVLVSIVVTTLLGWMLG. The Periplasmic portion of the chain corresponds to 223–250; the sequence is DVHYNGIVSAPPSVMTVVGHVDLAGSFN. The chain crosses the membrane as a helical span at residues 251-279; that stretch reads LGLAGVIFSFMLVNLFDSSGTLIGVTDKA. The Cytoplasmic segment spans residues 280–292; it reads GLADEKGKFPRMK. Residues 293 to 308 traverse the membrane as a helical segment; sequence QALYVDSISSVTGSFI. The Periplasmic segment spans residues 309–310; that stretch reads GT. A discontinuously helical membrane pass occupies residues 311 to 326; sequence SSVTAYIESSSGVSVG. Topologically, residues 327–330 are cytoplasmic; the sequence is GRTG. A helical membrane pass occupies residues 331-345; sequence LTAVVVGLLFLLVIF. Residues 346–356 are Periplasmic-facing; sequence LSPLAGMVPGY. Residues 357-376 form a helical membrane-spanning segment; it reads AAAGALIYVGVLMTSSLARV. At 377–381 the chain is on the cytoplasmic side; sequence NWQDL. Residues 382–417 constitute an intramembrane region (discontinuously helical); the sequence is TESVPAFITAVMMPFSFSITEGIALGFISYCVMKIG. Residues 418-445 are Cytoplasmic-facing; it reads TGRLRDLSPCVIIVALLFILKIVFIDAH.

Belongs to the nucleobase:cation symporter-2 (NCS2) (TC 2.A.40) family. Azg-like subfamily.

The protein localises to the cell inner membrane. Internal adenine may inhibit transport. High-affinity transporter for adenine. The protein is Adenine permease AdeP (adeP) of Escherichia coli (strain K12).